A 445-amino-acid chain; its full sequence is MREILHIQGGQCGNQIGAKFWEVICDEHGIDHTGKYAGDSDLQLERINVYYNEASGGRFVPRAVLMDLEPGTMDSVRSGPFGQIFRPDNFVFGQSGAGNNWAKGHYTEGAELIDSVLDVVRKEAENCDCLQGFQVCHSLGGGTGSGMGTLLISKIREEYPDRMMLTFSVFPSPKVSDTVVEPYNATLSVHQLVENADECMVLDNEALYDICFRTLKLATPTFGDLNHLISATMSGVTCCLRFPGQLNSDLRKLAVNLIPFPRLHFFMVGFAPLTSRGSQQYRALTVPELTQQMWDSKNMMCAADPRHGRYLTASAMFRGKMSTKEVDEQMLNVQNKNSSYFVEWIPNNVKSSVCDIPPIGLKMSSTFVGNSTSIQEMFRRVSEQFTAMFRRKAFLHWYTGEGMDEMEFTEAESNMNDLVAEYQQYQDATAEDEEYEEEEEEEEET.

The GTP site is built by Gln11, Glu69, Ser138, Gly142, Thr143, Gly144, Asn204, and Asn226. Residue Glu69 participates in Mg(2+) binding. The segment at 421–445 is disordered; that stretch reads EYQQYQDATAEDEEYEEEEEEEEET. Acidic residues predominate over residues 429-445; the sequence is TAEDEEYEEEEEEEEET.

Belongs to the tubulin family. Dimer of alpha and beta chains. A typical microtubule is a hollow water-filled tube with an outer diameter of 25 nm and an inner diameter of 15 nM. Alpha-beta heterodimers associate head-to-tail to form protofilaments running lengthwise along the microtubule wall with the beta-tubulin subunit facing the microtubule plus end conferring a structural polarity. Microtubules usually have 13 protofilaments but different protofilament numbers can be found in some organisms and specialized cells. The cofactor is Mg(2+).

It localises to the cytoplasm. The protein localises to the cytoskeleton. Tubulin is the major constituent of microtubules, a cylinder consisting of laterally associated linear protofilaments composed of alpha- and beta-tubulin heterodimers. Microtubules grow by the addition of GTP-tubulin dimers to the microtubule end, where a stabilizing cap forms. Below the cap, tubulin dimers are in GDP-bound state, owing to GTPase activity of alpha-tubulin. This is Tubulin beta-7 chain (TUBB7) from Zea mays (Maize).